The sequence spans 249 residues: tRNA pseudouridine synthase A (249 aa).

Residue aspartate 54 is the Nucleophile of the active site. Tyrosine 111 is a substrate binding site.

Belongs to the tRNA pseudouridine synthase TruA family. Homodimer.

The catalysed reaction is uridine(38/39/40) in tRNA = pseudouridine(38/39/40) in tRNA. In terms of biological role, formation of pseudouridine at positions 38, 39 and 40 in the anticodon stem and loop of transfer RNAs. The sequence is that of tRNA pseudouridine synthase A from Mycoplasma capricolum subsp. capricolum (strain California kid / ATCC 27343 / NCTC 10154).